The primary structure comprises 342 residues: tRNA (guanine(26)-N(2))-dimethyltransferase (342 aa).

The Trm1 methyltransferase domain maps to 1–336 (MRITEGSAVI…CPYAEVSEIL (336 aa)). R35, R60, and E76 together coordinate S-adenosyl-L-methionine.

The protein belongs to the class I-like SAM-binding methyltransferase superfamily. Trm1 family.

The catalysed reaction is guanosine(26) in tRNA + 2 S-adenosyl-L-methionine = N(2)-dimethylguanosine(26) in tRNA + 2 S-adenosyl-L-homocysteine + 2 H(+). Its function is as follows. Dimethylates a single guanine residue at position 26 of a number of tRNAs using S-adenosyl-L-methionine as donor of the methyl groups. The protein is tRNA (guanine(26)-N(2))-dimethyltransferase of Thermoplasma volcanium (strain ATCC 51530 / DSM 4299 / JCM 9571 / NBRC 15438 / GSS1).